The chain runs to 109 residues: uncharacterized protein (109 aa).

Residues 77 to 98 (TRTGHAYPRFTRPSFPSCNRNG) are disordered.

This is an uncharacterized protein from Homo sapiens (Human).